Here is a 391-residue protein sequence, read N- to C-terminus: UPF0229 protein BAA_0633 (391 aa).

Residues 1-16 (MGEENQPNYTISQENW) show a composition bias toward polar residues. Disordered stretches follow at residues 1–31 (MGEE…RHQE) and 80–117 (HVGQ…GDAA). Positions 21-31 (KGYDDQQRHQE) are enriched in basic and acidic residues. Residues 98–115 (GSGGQKQKGPGKGQGAGD) are compositionally biased toward gly residues.

Belongs to the UPF0229 family.

The sequence is that of UPF0229 protein BAA_0633 from Bacillus anthracis (strain A0248).